A 198-amino-acid chain; its full sequence is Na(+)-translocating NADH-quinone reductase subunit E (198 aa).

6 consecutive transmembrane segments (helical) span residues 11–31 (AVFI…FLAV), 35–55 (VTTA…SVPA), 77–97 (FLNF…LEMI), 109–129 (LGIF…VSFM), 140–160 (IVYG…LASI), and 176–196 (LGIT…FSGV).

Belongs to the NqrDE/RnfAE family. As to quaternary structure, composed of six subunits; NqrA, NqrB, NqrC, NqrD, NqrE and NqrF.

Its subcellular location is the cell inner membrane. The enzyme catalyses a ubiquinone + n Na(+)(in) + NADH + H(+) = a ubiquinol + n Na(+)(out) + NAD(+). Functionally, NQR complex catalyzes the reduction of ubiquinone-1 to ubiquinol by two successive reactions, coupled with the transport of Na(+) ions from the cytoplasm to the periplasm. NqrA to NqrE are probably involved in the second step, the conversion of ubisemiquinone to ubiquinol. The polypeptide is Na(+)-translocating NADH-quinone reductase subunit E (Photorhabdus laumondii subsp. laumondii (strain DSM 15139 / CIP 105565 / TT01) (Photorhabdus luminescens subsp. laumondii)).